The sequence spans 350 residues: UDP-glucose 4-epimerase (350 aa).

NAD(+) is bound at residue 7 to 38; sequence KILVTGSAGFIGTHTVVQLLNNGFNVSIIDNF. Residue serine 133 participates in substrate binding. Tyrosine 157 acts as the Proton acceptor in catalysis.

This sequence belongs to the NAD(P)-dependent epimerase/dehydratase family. The cofactor is NAD(+).

The catalysed reaction is UDP-alpha-D-glucose = UDP-alpha-D-galactose. It functions in the pathway carbohydrate metabolism; galactose metabolism. This chain is UDP-glucose 4-epimerase (GALE), found in Pisum sativum (Garden pea).